A 294-amino-acid chain; its full sequence is Melanocortin receptor 5 (294 aa).

Over 1–29 (FLDLQLNATEGNVSGPSVGNTSSPCEDMG) the chain is Extracellular. Asn-7, Asn-12, and Asn-20 each carry an N-linked (GlcNAc...) asparagine glycan. Residues 30–53 (IEVEVFLTLGLISLLENILVIGAI) traverse the membrane as a helical segment. Residues 54 to 65 (ARNKNLHVPMYF) are Cytoplasmic-facing. A helical membrane pass occupies residues 66 to 89 (FVCSLAVADMLVSLSNSWETITIY). Topologically, residues 90–106 (LIANKHLVLSDTSVRHL) are extracellular. A helical transmembrane segment spans residues 107 to 130 (DNVFDSMICISLVASMCSLLAVAV). Over 131–147 (DRYVTIFYALRYQHLMT) the chain is Cytoplasmic. Residues 148–171 (GRRCGAIIAGIWALCTGCGPVFIV) traverse the membrane as a helical segment. Residues 172 to 178 (YYESTYV) lie on the Extracellular side of the membrane. The helical transmembrane segment at 179 to 203 (VVCLVAMFLTMLLLMASLYAHMFLQ) threads the bilayer. Topologically, residues 204-231 (ARAHVRRIAALPGYRSARQRTSMKGAVT) are cytoplasmic. The helical transmembrane segment at 232–257 (LAMLLGVFIVCWAPFFLHLILMISCP) threads the bilayer. The Extracellular portion of the chain corresponds to 258–265 (QNLYCSCF). The helical transmembrane segment at 266 to 289 (MSHFNMYLILIMCNSVIDPLIYAF) threads the bilayer. Residues 290–294 (RSQEK) lie on the Cytoplasmic side of the membrane.

It belongs to the G-protein coupled receptor 1 family.

The protein localises to the cell membrane. Functionally, receptor for MSH (alpha, beta and gamma) and ACTH. The activity of this receptor is mediated by G proteins which activate adenylate cyclase. This receptor is a possible mediator of the immunomodulation properties of melanocortins. This chain is Melanocortin receptor 5 (MC5R), found in Sus scrofa (Pig).